We begin with the raw amino-acid sequence, 566 residues long: Type 3 secretion system secretin (566 aa).

Positions 1–22 (MKKFNIKSLTLLIVLLPLIVNA) are cleaved as a signal peptide.

It belongs to the bacterial secretin family. T3SS SctC subfamily. The core secretion machinery of the T3SS is composed of approximately 20 different proteins, including cytoplasmic components, a base, an export apparatus and a needle. This subunit is part of the base, which anchors the injectisome in the bacterial cell envelope. Forms a stable homooligomeric complex.

It localises to the cell outer membrane. Component of the type III secretion system (T3SS), also called injectisome, which is used to inject bacterial effector proteins into eukaryotic host cells. Forms a ring-shaped multimeric structure with an apparent central pore in the outer membrane. In Shigella sonnei, this protein is Type 3 secretion system secretin.